The primary structure comprises 306 residues: Acetyl-coenzyme A carboxylase carboxyl transferase subunit beta (306 aa).

Positions 25–294 (VWTKCDSCGQ…PSPDAPREAV (270 aa)) constitute a CoA carboxyltransferase N-terminal domain. Zn(2+) is bound by residues cysteine 29, cysteine 32, cysteine 48, and cysteine 51. Residues 29-51 (CDSCGQVLYRAELERNLEVCPKC) form a C4-type zinc finger. Residues 286–306 (SPDAPREAVVVPPVPDQDHEA) form a disordered region.

This sequence belongs to the AccD/PCCB family. In terms of assembly, acetyl-CoA carboxylase is a heterohexamer composed of biotin carboxyl carrier protein (AccB), biotin carboxylase (AccC) and two subunits each of ACCase subunit alpha (AccA) and ACCase subunit beta (AccD). It depends on Zn(2+) as a cofactor.

The protein resides in the cytoplasm. It catalyses the reaction N(6)-carboxybiotinyl-L-lysyl-[protein] + acetyl-CoA = N(6)-biotinyl-L-lysyl-[protein] + malonyl-CoA. It functions in the pathway lipid metabolism; malonyl-CoA biosynthesis; malonyl-CoA from acetyl-CoA: step 1/1. Its function is as follows. Component of the acetyl coenzyme A carboxylase (ACC) complex. Biotin carboxylase (BC) catalyzes the carboxylation of biotin on its carrier protein (BCCP) and then the CO(2) group is transferred by the transcarboxylase to acetyl-CoA to form malonyl-CoA. The polypeptide is Acetyl-coenzyme A carboxylase carboxyl transferase subunit beta (Cronobacter sakazakii (strain ATCC BAA-894) (Enterobacter sakazakii)).